A 359-amino-acid polypeptide reads, in one-letter code: RNA-binding protein 4B (359 aa).

2 RRM domains span residues 2 to 72 and 78 to 148; these read VKLF…ASKN and TKLH…LSTS. A CCHC-type zinc finger spans residues 160–177; the sequence is SGCYRCGKEGHWSKECPV. Residues 196–359 form an interaction with TNPO3 region; that stretch reads AVRTPYTMGY…YVDRARYSAF (164 aa).

As to quaternary structure, interacts with TNPO3, which may mediate nuclear import of the protein. In terms of tissue distribution, expressed in liver and kidney (at protein level). Ubiquitously expressed.

The protein resides in the nucleus. Its subcellular location is the nucleolus. Required for the translational activation of PER1 mRNA in response to circadian clock. Binds directly to the 3'-UTR of the PER1 mRNA. The sequence is that of RNA-binding protein 4B (RBM4B) from Homo sapiens (Human).